We begin with the raw amino-acid sequence, 951 residues long: MASKTPSSSSSRRPRNVGVGSFTINEEIGKGSFATVYRGTHVPSGSLVAIKSVNLGRLNKKLKDNLYVEIEILKSLHHPHIVALMDCRESTSHIHLMMEYCELGDLSYFIKKRDKLADNPSLFDMIRKYPMPVDGGLNQVVVRHFFKQLSSAMEFLRDRDFVHRDVKPQNLLLIPSPDWMAKSKNGPEAMKASKESIVPMVGINSLPMLKLADFGFARSLPSTSLAETLCGSPLYMAPEILRYEKYDARADLWSIGTVLYEMMTGKPPFRAANHVELLRKIEQNEDEIRFPSKTVFSRDLKDIARRFLKKRPEDRITFPEYFAHPVVTGPIPGLVGEDLPKEIITPSRSPEASVARHPSLRERQRENPTPKPVETTYESLIARDIGEQAPRSPHIEANQPVEIPGHKSGRPGSRDRPSAISAATAPNVDTLPRQRDRTERHYAPIGRPVSRKPSYDEQANLPVQEEIRSSDSITEAEQDVRDAREYVLVEKKAVEVNAFADEMAASPRLAHANHIPKQPTRRHTSMGAPNSTSGAVAVPPSRAVQKAQGNTRPDTSSARNSYGSYGKTGSSPSTASAIAKALQGASVRVFGVSWSPTLIGKGPSPQQLYNPYPAYPTPNTGFIGDARPIDEDQRVVNVIEDSATRSDVVYGFAEVKYRQLIPLAPSMNHGLGGPNNEKVGDAMDEDDGLTVEAIVNLSEEALVLYVKSLSLLSKSMDIAGAWWLRKNRGGVISGGHTPGSDSSSAVQAGNRINGAVQWVRTRFNEVLEKAELVRLKLVEAQKRLPEDHPGHPSNHATASKIVGGSSTTDGVVLSSGITAEKLMYDRALEMSRTAAINELANEDLPGCEISYTTAIRMLEAVLENDEELIPRKRSPSLREDKEKCDGGEVNGINFGDRKDVLKVLQMIRTRLHVLKKKMAVIARHQSMPPPSSPRHSHSGGTTPTIANTPPH.

The region spanning 22–327 is the Protein kinase domain; the sequence is FTINEEIGKG…FPEYFAHPVV (306 aa). Residues 28-36 and lysine 51 each bind ATP; that span reads IGKGSFATV. Aspartate 165 functions as the Proton acceptor in the catalytic mechanism. Disordered stretches follow at residues 343-375, 387-458, 514-573, and 924-951; these read IITPSRSPEASVARHPSLRERQRENPTPKPVET, EQAP…YDEQ, HIPK…SSPS, and HQSMPPPSSPRHSHSGGTTPTIANTPPH. Composition is skewed to basic and acidic residues over residues 359–368 and 432–442; these read SLRERQRENP and PRQRDRTERHY. Composition is skewed to polar residues over residues 547–573 and 939–951; these read AQGNTRPDTSSARNSYGSYGKTGSSPS and GGTTPTIANTPPH.

This sequence belongs to the protein kinase superfamily. Ser/Thr protein kinase family. APG1/unc-51/ULK1 subfamily. Homodimer. Forms a ternary complex with ATG13 and ATG17.

The protein resides in the cytoplasm. It localises to the preautophagosomal structure membrane. It catalyses the reaction L-seryl-[protein] + ATP = O-phospho-L-seryl-[protein] + ADP + H(+). The catalysed reaction is L-threonyl-[protein] + ATP = O-phospho-L-threonyl-[protein] + ADP + H(+). Serine/threonine protein kinase involved in the cytoplasm to vacuole transport (Cvt) and found to be essential in autophagy, where it is required for the formation of autophagosomes. Involved in the clearance of protein aggregates which cannot be efficiently cleared by the proteasome. Required for selective autophagic degradation of the nucleus (nucleophagy) as well as for mitophagy which contributes to regulate mitochondrial quantity and quality by eliminating the mitochondria to a basal level to fulfill cellular energy requirements and preventing excess ROS production. Also involved in endoplasmic reticulum-specific autophagic process, in selective removal of ER-associated degradation (ERAD) substrates. Plays a key role in ATG9 and ATG23 cycling through the pre-autophagosomal structure and is necessary to promote ATG18 binding to ATG9 through phosphorylation of ATG9. Catalyzes phosphorylation of ATG4, decreasing the interaction between ATG4 and ATG8 and impairing deconjugation of PE-conjugated forms of ATG8. This is Serine/threonine-protein kinase ATG1 from Sclerotinia sclerotiorum (strain ATCC 18683 / 1980 / Ss-1) (White mold).